A 293-amino-acid chain; its full sequence is Notch homolog 2 N-terminal-like protein C (293 aa).

4 consecutive EGF-like domains span residues Pro42 to Gln81, His82 to Gln120, Thr123 to Gln161, and Trp162 to Glu198. 17 disulfide bridges follow: Cys46–Cys59, Cys53–Cys69, Cys71–Cys80, Cys86–Cys97, Cys91–Cys108, Cys110–Cys119, Cys127–Cys139, Cys133–Cys149, Cys151–Cys160, Cys166–Cys177, Cys171–Cys186, Cys188–Cys197, Cys204–Cys216, Cys210–Cys225, Cys227–Cys236, Cys243–Cys254, and Cys248–Cys264. The N-linked (GlcNAc...) asparagine glycan is linked to Asn64. Asn173 carries N-linked (GlcNAc...) asparagine glycosylation. The 38-residue stretch at Asp200–Asp237 folds into the EGF-like 5; calcium-binding domain. The EGF-like 6 domain maps to Leu239–Glu276.

This sequence belongs to the NOTCH family. Interacts with NOTCH2. Interacts with DLL1; the interaction is direct. As to expression, expressed in radial glia neural stem cells during cortical development.

It is found in the secreted. Human-specific protein that promotes neural progenitor proliferation and evolutionary expansion of the brain neocortex by regulating the Notch signaling pathway. Able to promote neural progenitor self-renewal, possibly by down-regulating neuronal differentiation genes, thereby delaying the differentiation of neuronal progenitors and leading to an overall final increase in neuronal production. Acts by enhancing the Notch signaling pathway via two different mechanisms that probably work in parallel to reach the same effect. Enhances Notch signaling pathway in a non-cell-autonomous manner via direct interaction with NOTCH2. Also promotes Notch signaling pathway in a cell-autonomous manner through inhibition of cis DLL1-NOTCH2 interactions, which promotes neuronal differentiation. The polypeptide is Notch homolog 2 N-terminal-like protein C (Homo sapiens (Human)).